Here is a 646-residue protein sequence, read N- to C-terminus: Chaperone protein DnaK (646 aa).

Thr-198 carries the phosphothreonine; by autocatalysis modification. Positions 603-646 are disordered; the sequence is EQAQQAGGAEGFDPNAFQGGDAGQQKADDGVVDAEFTEVKDDKK. Residues 618–627 are compositionally biased toward low complexity; the sequence is AFQGGDAGQQ.

It belongs to the heat shock protein 70 family.

Functionally, acts as a chaperone. The polypeptide is Chaperone protein DnaK (Acinetobacter baumannii (strain ACICU)).